A 78-amino-acid polypeptide reads, in one-letter code: Large ribosomal subunit protein bL28 (78 aa).

The disordered stretch occupies residues methionine 1–asparagine 23.

Belongs to the bacterial ribosomal protein bL28 family.

The chain is Large ribosomal subunit protein bL28 from Shewanella sediminis (strain HAW-EB3).